Reading from the N-terminus, the 437-residue chain is MMGAEKAEGMEELELEEGGGSPSPSPMTAAGKMQALDFEHIGSLAAVAESLSTGSKWRRALTSVRVVILQAKINVLLPFGPLAVMLHYLSANHQGWVFLFSLIGITPLAERLGYATEQLALYTGPTIGGLLNATFGNATEMIISLYALKNGMIRVVQQSLLGSILSNMLLVLGCAFFAGGLVHPSRDQVFNKASAVVNSGLLLMAVLGLMFPAVLHFTHSEVQYGKSEVSLSRFSSCIMLVAYASYLFFQLKSQRSLYSPIGEQEEEVTEDEEEEKEITQGEAICWLFVLTIWISILSGYLVDAIQGASESLNMPVAFISVILLPIVGNAAEHASAIMFAMKDKLDITLGVAIGSSTQISMFVIPFCVVIGWIMGQQMDLNFQLFETATLFITVLVVAFMLQEGTSNYFKGLMLILCYLIVAASFFVHVDPDSSNNK.

The disordered stretch occupies residues 1–29 (MMGAEKAEGMEELELEEGGGSPSPSPMTA). At 1–65 (MMGAEKAEGM…KWRRALTSVR (65 aa)) the chain is on the cytoplasmic side. A helical transmembrane segment spans residues 66–86 (VVILQAKINVLLPFGPLAVML). The Extracellular segment spans residues 87-88 (HY). A helical transmembrane segment spans residues 89 to 109 (LSANHQGWVFLFSLIGITPLA). The Cytoplasmic portion of the chain corresponds to 110 to 126 (ERLGYATEQLALYTGPT). A helical transmembrane segment spans residues 127–147 (IGGLLNATFGNATEMIISLYA). Positions 136–171 (GNATEMIISLYALKNGMIRVVQQSLLGSILSNMLLV) are cation selection. At 148-161 (LKNGMIRVVQQSLL) the chain is on the extracellular side. Residues 162–182 (GSILSNMLLVLGCAFFAGGLV) traverse the membrane as a helical segment. At 183-194 (HPSRDQVFNKAS) the chain is on the cytoplasmic side. The helical transmembrane segment at 195 to 215 (AVVNSGLLLMAVLGLMFPAVL) threads the bilayer. The Extracellular portion of the chain corresponds to 216 to 228 (HFTHSEVQYGKSE). A helical transmembrane segment spans residues 229 to 249 (VSLSRFSSCIMLVAYASYLFF). Topologically, residues 250–281 (QLKSQRSLYSPIGEQEEEVTEDEEEEKEITQG) are cytoplasmic. Residues 282–302 (EAICWLFVLTIWISILSGYLV) traverse the membrane as a helical segment. The Extracellular portion of the chain corresponds to 303–310 (DAIQGASE). Residues 311-331 (SLNMPVAFISVILLPIVGNAA) form a helical membrane-spanning segment. Residues 328–363 (GNAAEHASAIMFAMKDKLDITLGVAIGSSTQISMFV) form a cation selection region. Over 332–352 (EHASAIMFAMKDKLDITLGVA) the chain is Cytoplasmic. Residues 353–373 (IGSSTQISMFVIPFCVVIGWI) form a helical membrane-spanning segment. The Extracellular portion of the chain corresponds to 374-379 (MGQQMD). Residues 380-400 (LNFQLFETATLFITVLVVAFM) traverse the membrane as a helical segment. Residues 401–408 (LQEGTSNY) are Cytoplasmic-facing. The chain crosses the membrane as a helical span at residues 409–429 (FKGLMLILCYLIVAASFFVHV). Topologically, residues 430–437 (DPDSSNNK) are extracellular.

This sequence belongs to the Ca(2+):cation antiporter (CaCA) (TC 2.A.19) family. Cation/proton exchanger (CAX) subfamily. As to expression, expressed in roots and shoots.

It is found in the vacuole membrane. In terms of biological role, vacuolar cation/proton exchanger (CAX). Translocates Ca(2+) and other metal ions into vacuoles using the proton gradient formed by H(+)-ATPase and H(+)-pyrophosphatase. This Oryza sativa subsp. japonica (Rice) protein is Vacuolar cation/proton exchanger 2 (CAX2).